The sequence spans 734 residues: Photosystem I P700 chlorophyll a apoprotein A2 (734 aa).

Transmembrane regions (helical) follow at residues 46–69 (IFAS…FHVA), 135–158 (LYTG…LHLQ), 175–199 (LNHH…HVAI), 273–291 (IAHH…GHMY), 330–353 (IHFQ…QHMY), 369–395 (AALY…IFFI), 417–439 (AIIS…LYVH), and 517–535 (FLVH…LILV). Positions 559 and 568 each coordinate [4Fe-4S] cluster. Helical transmembrane passes span 575–596 (AFYL…YWHW) and 643–665 (LSVW…MFLI). The chlorophyll a site is built by His654, Met662, and Tyr670. Trp671 is a phylloquinone binding site. Residues 707–727 (LVGLAHFSVGYIFTYAAFLIA) traverse the membrane as a helical segment.

This sequence belongs to the PsaA/PsaB family. In terms of assembly, the PsaA/B heterodimer binds the P700 chlorophyll special pair and subsequent electron acceptors. PSI consists of a core antenna complex that captures photons, and an electron transfer chain that converts photonic excitation into a charge separation. The eukaryotic PSI reaction center is composed of at least 11 subunits. It depends on P700 is a chlorophyll a/chlorophyll a' dimer, A0 is one or more chlorophyll a, A1 is one or both phylloquinones and FX is a shared 4Fe-4S iron-sulfur center. as a cofactor.

It is found in the plastid. It localises to the chloroplast thylakoid membrane. It carries out the reaction reduced [plastocyanin] + hnu + oxidized [2Fe-2S]-[ferredoxin] = oxidized [plastocyanin] + reduced [2Fe-2S]-[ferredoxin]. PsaA and PsaB bind P700, the primary electron donor of photosystem I (PSI), as well as the electron acceptors A0, A1 and FX. PSI is a plastocyanin-ferredoxin oxidoreductase, converting photonic excitation into a charge separation, which transfers an electron from the donor P700 chlorophyll pair to the spectroscopically characterized acceptors A0, A1, FX, FA and FB in turn. Oxidized P700 is reduced on the lumenal side of the thylakoid membrane by plastocyanin. The chain is Photosystem I P700 chlorophyll a apoprotein A2 from Gossypium hirsutum (Upland cotton).